The following is a 332-amino-acid chain: Phosphate acyltransferase (332 aa).

Belongs to the PlsX family. In terms of assembly, homodimer. Probably interacts with PlsY.

Its subcellular location is the cytoplasm. The enzyme catalyses a fatty acyl-[ACP] + phosphate = an acyl phosphate + holo-[ACP]. It functions in the pathway lipid metabolism; phospholipid metabolism. In terms of biological role, catalyzes the reversible formation of acyl-phosphate (acyl-PO(4)) from acyl-[acyl-carrier-protein] (acyl-ACP). This enzyme utilizes acyl-ACP as fatty acyl donor, but not acyl-CoA. The protein is Phosphate acyltransferase of Thermoanaerobacter pseudethanolicus (strain ATCC 33223 / 39E) (Clostridium thermohydrosulfuricum).